A 305-amino-acid chain; its full sequence is Probable aspartoacylase (305 aa).

Residues histidine 13 and glutamate 16 each coordinate Zn(2+). Substrate is bound by residues arginine 55 and 62-63 (NR). Histidine 105 lines the Zn(2+) pocket. The substrate site is built by glutamate 163 and tyrosine 273.

Belongs to the AspA/AstE family. Aspartoacylase subfamily. Zn(2+) is required as a cofactor.

It carries out the reaction an N-acyl-L-aspartate + H2O = a carboxylate + L-aspartate. This Prochlorococcus marinus (strain NATL1A) protein is Probable aspartoacylase.